The following is a 525-amino-acid chain: GMP synthase [glutamine-hydrolyzing] (525 aa).

In terms of domain architecture, Glutamine amidotransferase type-1 spans 9–207 (RILILDFGSQ…VLDICACEAL (199 aa)). Cysteine 86 acts as the Nucleophile in catalysis. Catalysis depends on residues histidine 181 and glutamate 183. The region spanning 208-400 (WTPATIIEDA…LGLPYDMLYR (193 aa)) is the GMPS ATP-PPase domain. 235-241 (SGGVDSS) is an ATP binding site.

In terms of assembly, homodimer.

The catalysed reaction is XMP + L-glutamine + ATP + H2O = GMP + L-glutamate + AMP + diphosphate + 2 H(+). The protein operates within purine metabolism; GMP biosynthesis; GMP from XMP (L-Gln route): step 1/1. Functionally, catalyzes the synthesis of GMP from XMP. This chain is GMP synthase [glutamine-hydrolyzing], found in Yersinia enterocolitica serotype O:8 / biotype 1B (strain NCTC 13174 / 8081).